We begin with the raw amino-acid sequence, 567 residues long: Urease subunit alpha (567 aa).

The Urease domain occupies 129 to 567 (GGVDTHIHFI…LPMAQRYFLF (439 aa)). Ni(2+)-binding residues include H134, H136, and K217. K217 carries the N6-carboxylysine modification. Position 219 (H219) interacts with substrate. Positions 246 and 272 each coordinate Ni(2+). The active-site Proton donor is H320. D360 is a Ni(2+) binding site.

It belongs to the metallo-dependent hydrolases superfamily. Urease alpha subunit family. As to quaternary structure, heterotrimer of UreA (gamma), UreB (beta) and UreC (alpha) subunits. Three heterotrimers associate to form the active enzyme. Ni cation serves as cofactor. Post-translationally, carboxylation allows a single lysine to coordinate two nickel ions.

It localises to the cytoplasm. The catalysed reaction is urea + 2 H2O + H(+) = hydrogencarbonate + 2 NH4(+). Its pathway is nitrogen metabolism; urea degradation; CO(2) and NH(3) from urea (urease route): step 1/1. The sequence is that of Urease subunit alpha from Aliivibrio fischeri (strain MJ11) (Vibrio fischeri).